Here is a 282-residue protein sequence, read N- to C-terminus: Large ribosomal subunit protein uL4c (282 aa).

The transit peptide at methionine 1 to serine 49 directs the protein to the chloroplast. The segment at glutamate 106–valine 138 is disordered.

The protein belongs to the universal ribosomal protein uL4 family. In terms of assembly, part of the 50S ribosomal subunit.

It localises to the plastid. The protein localises to the chloroplast. Functionally, this protein binds directly and specifically to 23S rRNA. May play a role in plastid transcriptional regulation. The polypeptide is Large ribosomal subunit protein uL4c (RPL4) (Arabidopsis thaliana (Mouse-ear cress)).